A 424-amino-acid polypeptide reads, in one-letter code: Serine--tRNA ligase (424 aa).

Residues 109–129 (QEDVPYGESEEDNREERKWGD) are disordered. 231–233 (TAE) serves as a coordination point for L-serine. 262–264 (RSE) contacts ATP. Glu285 is a binding site for L-serine. 349–352 (EISS) lines the ATP pocket. Ser385 provides a ligand contact to L-serine.

The protein belongs to the class-II aminoacyl-tRNA synthetase family. Type-1 seryl-tRNA synthetase subfamily. In terms of assembly, homodimer. The tRNA molecule binds across the dimer.

Its subcellular location is the cytoplasm. It carries out the reaction tRNA(Ser) + L-serine + ATP = L-seryl-tRNA(Ser) + AMP + diphosphate + H(+). It catalyses the reaction tRNA(Sec) + L-serine + ATP = L-seryl-tRNA(Sec) + AMP + diphosphate + H(+). It participates in aminoacyl-tRNA biosynthesis; selenocysteinyl-tRNA(Sec) biosynthesis; L-seryl-tRNA(Sec) from L-serine and tRNA(Sec): step 1/1. Catalyzes the attachment of serine to tRNA(Ser). Is also able to aminoacylate tRNA(Sec) with serine, to form the misacylated tRNA L-seryl-tRNA(Sec), which will be further converted into selenocysteinyl-tRNA(Sec). In Shouchella clausii (strain KSM-K16) (Alkalihalobacillus clausii), this protein is Serine--tRNA ligase.